Consider the following 125-residue polypeptide: MRLFKQLERWKIRRQINQSIIDVIFRLRDRLAHYWQADVNTPQVDFMLLHIACSLGRIERGGCVSSLYSEMLEEMQSAVIFPQVLAIHQDLLKLMPFSIPEAEQTYFLANIHSLVLEQKQLKPLK.

A PRD domain is found at 15–121; that stretch reads QINQSIIDVI…HSLVLEQKQL (107 aa).

This is an uncharacterized protein from Haemophilus influenzae (strain ATCC 51907 / DSM 11121 / KW20 / Rd).